Reading from the N-terminus, the 549-residue chain is Glucose-6-phosphate isomerase (549 aa).

An N6-acetyllysine mark is found at K80, K228, and K234. Catalysis depends on E355, which acts as the Proton donor. Catalysis depends on residues H386 and K514.

This sequence belongs to the GPI family.

It is found in the cytoplasm. The enzyme catalyses alpha-D-glucose 6-phosphate = beta-D-fructose 6-phosphate. Its pathway is carbohydrate biosynthesis; gluconeogenesis. It participates in carbohydrate degradation; glycolysis; D-glyceraldehyde 3-phosphate and glycerone phosphate from D-glucose: step 2/4. In terms of biological role, catalyzes the reversible isomerization of glucose-6-phosphate to fructose-6-phosphate. This is Glucose-6-phosphate isomerase from Escherichia coli (strain SMS-3-5 / SECEC).